A 200-amino-acid polypeptide reads, in one-letter code: MYAYIKGTLSQLFPTHVVVETCGIGYEIQTPNSYRFQKYLEKEVQIYTSLIVREDAQLLYGFINEEEKEMFLSLIKVTGIGPKSALAILASSTPHEVKLAIENENDAYLTQFPGIGKKTARQIVLDLKGKVTITEENSDDLLQTQVNGNEQNQIISEALLALQALGYSKRELTKVEKSLNKHNVNSVDEAVKIGLQTLVS.

Residues Met1–Ile63 are domain I. The segment at Asn64–Leu142 is domain II. Residues Gln143–Asn149 form a flexible linker region. The tract at residues Glu150 to Ser200 is domain III.

This sequence belongs to the RuvA family. Homotetramer. Forms an RuvA(8)-RuvB(12)-Holliday junction (HJ) complex. HJ DNA is sandwiched between 2 RuvA tetramers; dsDNA enters through RuvA and exits via RuvB. An RuvB hexamer assembles on each DNA strand where it exits the tetramer. Each RuvB hexamer is contacted by two RuvA subunits (via domain III) on 2 adjacent RuvB subunits; this complex drives branch migration. In the full resolvosome a probable DNA-RuvA(4)-RuvB(12)-RuvC(2) complex forms which resolves the HJ.

The protein resides in the cytoplasm. Functionally, the RuvA-RuvB-RuvC complex processes Holliday junction (HJ) DNA during genetic recombination and DNA repair, while the RuvA-RuvB complex plays an important role in the rescue of blocked DNA replication forks via replication fork reversal (RFR). RuvA specifically binds to HJ cruciform DNA, conferring on it an open structure. The RuvB hexamer acts as an ATP-dependent pump, pulling dsDNA into and through the RuvAB complex. HJ branch migration allows RuvC to scan DNA until it finds its consensus sequence, where it cleaves and resolves the cruciform DNA. This chain is Holliday junction branch migration complex subunit RuvA, found in Staphylococcus epidermidis (strain ATCC 35984 / DSM 28319 / BCRC 17069 / CCUG 31568 / BM 3577 / RP62A).